The sequence spans 160 residues: Cell division protein SepF (160 aa).

Acidic residues predominate over residues 18 to 30; that stretch reads AEGEDDFEDDVDT. The segment at 18–72 is disordered; that stretch reads AEGEDDFEDDVDTGETSFDSDHSVTPMPSSSASASTPSAPREQSNPFQGGRVSRI. Positions 45–57 are enriched in low complexity; the sequence is PSSSASASTPSAP.

Belongs to the SepF family. In terms of assembly, homodimer. Interacts with FtsZ.

It is found in the cytoplasm. Cell division protein that is part of the divisome complex and is recruited early to the Z-ring. Probably stimulates Z-ring formation, perhaps through the cross-linking of FtsZ protofilaments. Its function overlaps with FtsA. The chain is Cell division protein SepF from Bifidobacterium adolescentis (strain ATCC 15703 / DSM 20083 / NCTC 11814 / E194a).